Here is a 311-residue protein sequence, read N- to C-terminus: MATDGESISMSLAVATCVAMALFYVLILYVPTVILRLPSASSYTEFMIRRFICAAICTVASLVFTAFILPIKSWEASYILGVYGIRKDHLWQGVVYPLLLTSLVYAGSLVLKLFTLLESWKENGGGCSSFNYIRSFFQTIPASVLTSASNVSVWRNFIVAPVTEELVFRSCMIPLLLCAGFRINTAIFLCPVLFSLAHLNHFREMYIRHNRSYLRASLIVGLQLGYTVIFGAYASFLFIRTGHLAAPLFAHIFCNYMGLPVLYANGKGLVSAAFLGGVVGFVLLLFPLTKPLMYNDSTNDCPCWLGYCLWN.

3 consecutive transmembrane segments (helical) span residues 14–34 (VATC…PTVI), 51–71 (FICA…ILPI), and 94–114 (VVYP…LKLF). Glutamate 164 (proton donor/acceptor) is an active-site residue. The helical transmembrane segment at 173-193 (IPLLLCAGFRINTAIFLCPVL) threads the bilayer. Catalysis depends on histidine 198, which acts as the Proton donor/acceptor. A run of 3 helical transmembrane segments spans residues 219–239 (IVGL…FLFI), 244–264 (LAAP…VLYA), and 268–288 (GLVS…LFPL).

It belongs to the peptidase U48 family. As to expression, expressed in seeds, stems, leaves, flowers and siliques.

The protein localises to the endoplasmic reticulum membrane. The catalysed reaction is Hydrolyzes the peptide bond -P2-(S-farnesyl or geranylgeranyl)C-P1'-P2'-P3'-COOH where P1' and P2' are amino acids with aliphatic sidechains and P3' is any C-terminal residue.. With respect to regulation, inhibited in vitro by L-1-tosylamido-2-phenylethyl chloromethyl ketone (TPCK) and N-ethylmaleimide, but not by EDTA. Functionally, protease involved in the processing of a variety of prenylated proteins containing the C-terminal CAAX motif, where C is a cysteine modified with an isoprenoid lipid, A is an aliphatic amino acid and X is any C-terminal amino acid. Proteolytically removes the C-terminal three residues of farnesylated and geranylated proteins, leaving the prenylated cysteine as the new C-terminus. The substrate specificity is only partially overlapping with that of FACE1. CAAX processing is likely required for subcellular targeting of prenylated proteins to the plasma membrane. This chain is CAAX prenyl protease 2 (FACE2), found in Arabidopsis thaliana (Mouse-ear cress).